A 134-amino-acid chain; its full sequence is Flagellar basal-body rod protein FlgC (134 aa).

The protein belongs to the flagella basal body rod proteins family. As to quaternary structure, the basal body constitutes a major portion of the flagellar organelle and consists of four rings (L,P,S, and M) mounted on a central rod. The rod consists of about 26 subunits of FlgG in the distal portion, and FlgB, FlgC and FlgF are thought to build up the proximal portion of the rod with about 6 subunits each.

The protein resides in the bacterial flagellum basal body. The chain is Flagellar basal-body rod protein FlgC (flgC) from Escherichia coli O157:H7.